Here is a 210-residue protein sequence, read N- to C-terminus: Orotate phosphoribosyltransferase (210 aa).

5-phospho-alpha-D-ribose 1-diphosphate-binding positions include R97, K101, H103, and 123 to 131 (EDLISTGGS). S127 contributes to the orotate binding site.

Belongs to the purine/pyrimidine phosphoribosyltransferase family. PyrE subfamily. As to quaternary structure, homodimer. It depends on Mg(2+) as a cofactor.

It catalyses the reaction orotidine 5'-phosphate + diphosphate = orotate + 5-phospho-alpha-D-ribose 1-diphosphate. The protein operates within pyrimidine metabolism; UMP biosynthesis via de novo pathway; UMP from orotate: step 1/2. In terms of biological role, catalyzes the transfer of a ribosyl phosphate group from 5-phosphoribose 1-diphosphate to orotate, leading to the formation of orotidine monophosphate (OMP). The sequence is that of Orotate phosphoribosyltransferase from Porphyromonas gingivalis (strain ATCC BAA-308 / W83).